The chain runs to 220 residues: ATP-dependent Clp protease proteolytic subunit (220 aa).

Residue S125 is the Nucleophile of the active site. The active site involves H150.

Belongs to the peptidase S14 family. Fourteen ClpP subunits assemble into 2 heptameric rings which stack back to back to give a disk-like structure with a central cavity, resembling the structure of eukaryotic proteasomes.

It localises to the cytoplasm. It carries out the reaction Hydrolysis of proteins to small peptides in the presence of ATP and magnesium. alpha-casein is the usual test substrate. In the absence of ATP, only oligopeptides shorter than five residues are hydrolyzed (such as succinyl-Leu-Tyr-|-NHMec, and Leu-Tyr-Leu-|-Tyr-Trp, in which cleavage of the -Tyr-|-Leu- and -Tyr-|-Trp bonds also occurs).. Functionally, cleaves peptides in various proteins in a process that requires ATP hydrolysis. Has a chymotrypsin-like activity. Plays a major role in the degradation of misfolded proteins. In Bacteroides thetaiotaomicron (strain ATCC 29148 / DSM 2079 / JCM 5827 / CCUG 10774 / NCTC 10582 / VPI-5482 / E50), this protein is ATP-dependent Clp protease proteolytic subunit.